Consider the following 142-residue polypeptide: Hemoglobin A subunit alpha-1 (142 aa).

Positions 2–142 (VLTAGDKANV…VATALTSKYR (141 aa)) constitute a Globin domain. Histidine 59 is an O2 binding site. Histidine 88 is a binding site for heme b.

This sequence belongs to the globin family. Tetramer of alpha-1, alpha-2 and two identical beta chains. As to expression, red blood cells.

Functionally, involved in oxygen transport from the lung to the various peripheral tissues. The protein is Hemoglobin A subunit alpha-1 of Aldabrachelys gigantea (Aldabra giant tortoise).